The primary structure comprises 375 residues: Growth/differentiation factor 8 (375 aa).

A signal peptide spans 1–23 (MQKLQLCVYIYLFMLIVAGPVDL). Positions 24–266 (NENSEQKENV…VTDTPKRSRR (243 aa)) are excised as a propeptide. N-linked (GlcNAc...) asparagine glycosylation occurs at N71. Intrachain disulfides connect C272-C282, C281-C340, C309-C372, and C313-C374.

This sequence belongs to the TGF-beta family. Homodimer; disulfide-linked. Interacts with WFIKKN2, leading to inhibit its activity. Interacts with FSTL3. Post-translationally, synthesized as large precursor molecule that undergoes proteolytic cleavage to generate an N-terminal propeptide and a disulfide linked C-terminal dimer, which is the biologically active molecule. The circulating form consists of a latent complex of the C-terminal dimer and other proteins, including its propeptide, which maintain the C-terminal dimer in a latent, inactive state. Ligand activation requires additional cleavage of the prodomain by a tolloid-like metalloproteinase.

The protein resides in the secreted. In terms of biological role, acts specifically as a negative regulator of skeletal muscle growth. The chain is Growth/differentiation factor 8 (MSTN) from Papio hamadryas (Hamadryas baboon).